Reading from the N-terminus, the 361-residue chain is Peptide chain release factor 1 (361 aa).

Residue glutamine 240 is modified to N5-methylglutamine.

Belongs to the prokaryotic/mitochondrial release factor family. In terms of processing, methylated by PrmC. Methylation increases the termination efficiency of RF1.

The protein resides in the cytoplasm. Its function is as follows. Peptide chain release factor 1 directs the termination of translation in response to the peptide chain termination codons UAG and UAA. This Mycobacterium leprae (strain Br4923) protein is Peptide chain release factor 1.